The following is a 426-amino-acid chain: Glutamate-1-semialdehyde 2,1-aminomutase (426 aa).

Position 265 is an N6-(pyridoxal phosphate)lysine (Lys265).

This sequence belongs to the class-III pyridoxal-phosphate-dependent aminotransferase family. HemL subfamily. As to quaternary structure, homodimer. It depends on pyridoxal 5'-phosphate as a cofactor.

It localises to the cytoplasm. It catalyses the reaction (S)-4-amino-5-oxopentanoate = 5-aminolevulinate. Its pathway is porphyrin-containing compound metabolism; protoporphyrin-IX biosynthesis; 5-aminolevulinate from L-glutamyl-tRNA(Glu): step 2/2. The protein is Glutamate-1-semialdehyde 2,1-aminomutase of Marinobacter nauticus (strain ATCC 700491 / DSM 11845 / VT8) (Marinobacter aquaeolei).